Consider the following 876-residue polypeptide: MSARSAKFMYRSGNAGASGDLSVEYGTDLGALTRLEDKIRLLSDDLESEREMRQRIEREKAELQIQVMSLSERLEEAEGSSESVVEMNKKRDSELAKLRKLLEDVHLESEETAHHLRQKHQAAIQEMQDQLDQVQKAKNKSDKEKQKFQAEVFELLAQLETANKEKLTAMKTVEKLEYTVHELNIKIEEINRTVIELTSQKTRLSQENTELIKEVHEHKMQLDNANHLKQQLAQQLEDTKHRLEEEERKRASLENHAHTLEVELESLKVQLDEESEARLELERQLTKANGDAASWKSKYEAELQAHADEVEELRRKMAQKISEYEEQLEALLNKCSSLAKQKSRLQSEVEVLIMDLEKATTHAQQLEKRVAQLEKLNLDLKNKLEEVTMLMEQAQKEARAKAAELQKLQHEYEKLRDQRDALARENKKLTDDLAECKSQLNDAHRRIHEQEIEIKRLENEREELSAAYKEAETLRKQEEAKNQRLTAELAQVRHDYEKRLAQKEEEIEALRKQYQIEIEQLNMRLAEAEAKLKTEIARLKKKYQAQITELELSLDAANKANIDLQKTIKKQALQITELQAHYDEVHRQLQQAVDQLGVTQRRCQALQAELEEQRIALEQANRAKRQAEQLHEEAVARVNELTTINVNLASAKSKLESEFAALQNDYDEVHKELRISDERVQKLTIELKSTKDLLVEEQERLVKMETVKKSLEQEVRTLHVRIEEVEANALAGGKRVIAKLESRIRDVEIEVEEERRRHAETEKMLRKKDHRLKELLVQNEEDHKQIQLLQEMVDKMNEKVKVYKRQMQETREGMSQQNLTRVRRFQRELEAAEDRADQAESNLSFIRAKHRSWVTTSQVPGGTRQVFVTQEEQSNY.

Residues 1–28 (MSARSAKFMYRSGNAGASGDLSVEYGTD) are nonhelical region. The stretch at 29 to 855 (LGALTRLEDK…IRAKHRSWVT (827 aa)) forms a coiled coil. Residues 856 to 876 (TSQVPGGTRQVFVTQEEQSNY) are nonhelical region.

It belongs to the paramyosin family. As to quaternary structure, homodimer.

The protein localises to the cytoplasm. Its subcellular location is the myofibril. In terms of biological role, paramyosin is a major structural component of many thick filaments isolated from invertebrate muscles. The sequence is that of Paramyosin from Sarcoptes scabiei (Itch mite).